The following is a 328-amino-acid chain: N-acyl-aromatic-L-amino acid amidohydrolase (carboxylate-forming) A (328 aa).

Positions 30 and 33 each coordinate Zn(2+). Residues Arg74 and 81–82 (NR) contribute to the substrate site. Position 127 (His127) interacts with Zn(2+). Residues Glu189 and Tyr300 each coordinate substrate.

Belongs to the AspA/AstE family. Aspartoacylase subfamily. In terms of assembly, homotetramer. Requires Zn(2+) as cofactor.

Its subcellular location is the apical cell membrane. The protein resides in the cytoplasm. The enzyme catalyses an N-acyl-aromatic L-alpha-amino acid + H2O = an aromatic L-alpha-amino acid + a carboxylate. It catalyses the reaction an N-acetyl-L-cysteine-S-conjugate + H2O = an S-substituted L-cysteine + acetate. Plays an important role in deacetylating mercapturic acids in kidney proximal tubules. The protein is N-acyl-aromatic-L-amino acid amidohydrolase (carboxylate-forming) A (acy3.1) of Danio rerio (Zebrafish).